Here is a 1396-residue protein sequence, read N- to C-terminus: ATP-binding cassette transporter pdr1 (1396 aa).

The segment at methionine 1–proline 22 is disordered. Positions leucine 73–lysine 320 constitute an ABC transporter 1 domain. The ABC transmembrane type-2 1 domain maps to leucine 412–phenylalanine 622. A run of 6 helical transmembrane segments spans residues tyrosine 431–tyrosine 451, valine 466–phenylalanine 486, leucine 512–leucine 532, phenylalanine 543–isoleucine 563, isoleucine 572–methionine 592, and glycine 680–isoleucine 700. One can recognise an ABC transporter 2 domain in the interval leucine 758–glycine 1001. Glycine 794–serine 801 is an ATP binding site. Positions phenylalanine 1071 to leucine 1286 constitute an ABC transmembrane type-2 2 domain. Helical transmembrane passes span valine 1095 to glycine 1115, phenylalanine 1166 to phenylalanine 1186, phenylalanine 1208 to alanine 1228, phenylalanine 1245 to tryptophan 1265, and cysteine 1361 to isoleucine 1381.

This sequence belongs to the ABC transporter superfamily. ABCG family. PDR (TC 3.A.1.205) subfamily.

It is found in the endoplasmic reticulum membrane. The sequence is that of ATP-binding cassette transporter pdr1 (pdr1) from Schizosaccharomyces pombe (strain 972 / ATCC 24843) (Fission yeast).